Here is a 391-residue protein sequence, read N- to C-terminus: uncharacterized protein (391 aa).

The 141-residue stretch at 247–387 folds into the Flavodoxin-like domain; it reads AVIVYATIYS…KIKEFGRKLA (141 aa).

This is an uncharacterized protein from Methanocaldococcus jannaschii (strain ATCC 43067 / DSM 2661 / JAL-1 / JCM 10045 / NBRC 100440) (Methanococcus jannaschii).